A 184-amino-acid chain; its full sequence is UPF0149 protein Pmen_0324 (184 aa).

This sequence belongs to the UPF0149 family.

The chain is UPF0149 protein Pmen_0324 from Ectopseudomonas mendocina (strain ymp) (Pseudomonas mendocina).